A 974-amino-acid polypeptide reads, in one-letter code: Hexokinase-1 (974 aa).

Residues 1 to 42 (MGWGAPLLSRMLHGPGQAGETSPVPERQSGSENPASEDRRPL) are disordered. Positions 57–66 (CQRGQAVDVE) are mitochondrial-binding peptide (MBP). Hexokinase domains lie at 72–514 (PLTE…MVTA) and 520–962 (AEQH…LITA). Residues arginine 86 and 140–145 (DLGGSS) each bind ATP. The interval 129 to 263 (DGSEKGDFIA…DYDANIVAVV (135 aa)) is hexokinase small subdomain 1. 140-147 (DLGGSSFR) serves as a coordination point for D-glucose 6-phosphate. Residues serine 211, 228–229 (TK), and 264–265 (ND) each bind D-glucose. Residues 264–503 (NDTVGTMMTC…SDVRFLLSES (240 aa)) are hexokinase large subdomain 1. 2 residues coordinate D-glucose 6-phosphate: aspartate 265 and threonine 288. Residues asparagine 291, glutamate 316, and 347 to 350 (QLFE) contribute to the D-glucose site. Serine 393 bears the Phosphoserine mark. 469–471 (DGS) contacts D-glucose 6-phosphate. 481 to 482 (RR) is an ATP binding site. Residues serine 505 and 588–592 (DLGGT) each bind D-glucose 6-phosphate. The tract at residues 577–711 (DGTEHGDFLA…EFDLDVVAVV (135 aa)) is hexokinase small subdomain 2. 588–593 (DLGGTN) is a binding site for ATP. D-glucose contacts are provided by residues 659–660 (SF), 676–677 (TK), and 712–713 (ND). A hexokinase large subdomain 2 region spans residues 712 to 951 (NDTVGTMMTC…CTVSFLLSED (240 aa)). Positions 713 and 736 each coordinate D-glucose 6-phosphate. Threonine 736 lines the ATP pocket. D-glucose-binding positions include 738–739 (SN), glutamate 764, and glutamate 798. ATP is bound by residues 803–804 (GM), 840–844 (TKFLS), and 919–923 (TLYKL). Residues 917-919 (DGT) and serine 953 each bind D-glucose 6-phosphate.

It belongs to the hexokinase family. Monomer. Interacts with RABL2/RABL2A; binds preferentially to GTP-bound RABL2. Interacts with VDAC1. The HK1-VDAC1 complex interacts with ATF2. Interacts (via N-terminal spermatogenic cell-specific region) with PFKM isoform 2 and isoform 3 (via C-terminus). Interacts with SMAD5. Post-translationally, tyrosine-phosphorylated. In rapidly growing tumor cells exhibiting high glucose catabolic rates, isoform HK1 is markedly elevated. Isoform HK1-SA, isoform HK1-SB and isoform HK1-SC are found only in spermatogenic cells. Isoform HK1-SC is detected in round spermatids, condensing spermatids and mature sperm where it is found in the head membranes, mitochondria of the midpiece and the fibrous sheath of the flagellum. Expressed within the principal piece and midpiece of sperm tail (at protein level).

It is found in the mitochondrion outer membrane. Its subcellular location is the cytoplasm. The protein resides in the cytosol. It localises to the membrane. It carries out the reaction a D-hexose + ATP = a D-hexose 6-phosphate + ADP + H(+). The catalysed reaction is D-fructose + ATP = D-fructose 6-phosphate + ADP + H(+). The enzyme catalyses D-glucose + ATP = D-glucose 6-phosphate + ADP + H(+). It catalyses the reaction D-mannose + ATP = D-mannose 6-phosphate + ADP + H(+). It carries out the reaction D-glucosamine + ATP = D-glucosamine 6-phosphate + ADP + H(+). It functions in the pathway carbohydrate metabolism; hexose metabolism. It participates in carbohydrate degradation; glycolysis; D-glyceraldehyde 3-phosphate and glycerone phosphate from D-glucose: step 1/4. With respect to regulation, hexokinase is an allosteric enzyme inhibited by its product D-glucose 6-phosphate. Hexokinase activity is inhibited by N-acetyl-D-glucosamine. Its function is as follows. Catalyzes the phosphorylation of various hexoses, such as D-glucose, D-glucosamine, D-fructose, D-mannose and 2-deoxy-D-glucose, to hexose 6-phosphate (D-glucose 6-phosphate, D-glucosamine 6-phosphate, D-fructose 6-phosphate, D-mannose 6-phosphate and 2-deoxy-D-glucose 6-phosphate, respectively). Does not phosphorylate N-acetyl-D-glucosamine. Mediates the initial step of glycolysis by catalyzing phosphorylation of D-glucose to D-glucose 6-phosphate. Involved in innate immunity and inflammation by acting as a pattern recognition receptor for bacterial peptidoglycan. When released in the cytosol, N-acetyl-D-glucosamine component of bacterial peptidoglycan inhibits the hexokinase activity of HK1 and causes its dissociation from mitochondrial outer membrane, thereby activating the NLRP3 inflammasome. The polypeptide is Hexokinase-1 (Mus musculus (Mouse)).